The primary structure comprises 530 residues: Membrane-associated transporter protein (530 aa).

The Cytoplasmic segment spans residues 1–46; sequence MGSNSGQAGRHIYKSLADDGPFDSVEPPKRPTSRLIMHSMAMFGRE. The chain crosses the membrane as a helical span at residues 47–67; it reads FCYAVEAAYVTPVLLSVGLPS. A topological domain (extracellular) is located at residue S68. The helical transmembrane segment at 69–89 threads the bilayer; that stretch reads LYSIVWFLSPILGFLLQPVVG. Residues 90–110 are Cytoplasmic-facing; sequence SASDHCRSRWGRRRPYILTLG. The chain crosses the membrane as a helical span at residues 111-131; sequence VMMLVGMALYLNGATVVAALI. At 132–138 the chain is on the extracellular side; the sequence is ANPRRKL. A helical membrane pass occupies residues 139–159; sequence VWAISVTMIGVVLFDFAADFI. Topologically, residues 160-184 are cytoplasmic; sequence DGPIKAYLFDVCSHQDKEKGLHYHA. A helical transmembrane segment spans residues 185 to 205; the sequence is LFTGFGGALGYLLGAIDWAHL. Residues 206–216 are Extracellular-facing; the sequence is ELGRLLGTEFQ. The helical transmembrane segment at 217 to 237 threads the bilayer; it reads VMFFFSALVLTLCFTVHLCSI. Residues 238-318 lie on the Cytoplasmic side of the membrane; sequence SEAPLTEVAK…ALVNMPPHYR (81 aa). The helical transmembrane segment at 319–339 threads the bilayer; it reads YLCISHLIGWTAFLSNMLFFT. Over 340-366 the chain is Extracellular; it reads DFMGQIVYRGDPYSAHNSTEFLIYERG. A glycan (N-linked (GlcNAc...) asparagine) is linked at N356. The helical transmembrane segment at 367 to 387 threads the bilayer; the sequence is VEVGCWGLCINSVFSSLYSYF. Over 388–398 the chain is Cytoplasmic; sequence QKVLVSYIGLK. Residues 399–419 form a helical membrane-spanning segment; the sequence is GLYFTGYLLFGLGTGFIGLFP. The Extracellular segment spans residues 420 to 425; sequence NVYSTL. A helical transmembrane segment spans residues 426 to 446; sequence VLCSLFGVMSSTLYTVPFNLI. Topologically, residues 447–477 are cytoplasmic; the sequence is TEYHREEEKERQQAPGGDPDNSVRGKGMDCA. A helical transmembrane segment spans residues 478–498; sequence TLTCMVQLAQILVGGGLGFLV. The Extracellular segment spans residues 499–504; sequence NTAGTV. Residues 505-525 form a helical membrane-spanning segment; sequence VVVVITASAVALIGCCFVALF. The Cytoplasmic portion of the chain corresponds to 526–530; that stretch reads VRYVD.

It belongs to the glycoside-pentoside-hexuronide (GPH) cation symporter transporter (TC 2.A.2) family. In terms of assembly, interacts with TYRP1. In terms of tissue distribution, expressed in mature melanocytes.

The protein resides in the melanosome membrane. The catalysed reaction is sucrose(out) + H(+)(out) = sucrose(in) + H(+)(in). It carries out the reaction D-glucose(out) + H(+)(out) = D-glucose(in) + H(+)(in). Functionally, proton-associated glucose and sucrose transporter. May be able to transport also fructose. Expressed at a late melanosome maturation stage where functions as proton/glucose exporter which increase lumenal pH by decreasing glycolysis. Regulates melanogenesis by maintaining melanosome neutralization that is initially initiated by transient OCA2 and required for a proper function of the tyrosinase TYR. The protein is Membrane-associated transporter protein of Homo sapiens (Human).